A 274-amino-acid polypeptide reads, in one-letter code: Large ribosomal subunit protein uL2cz/uL2cy (274 aa).

Residues 225-274 (PVDHPHGGGEGRAPIGRKKPVTPWGYPALGRRSRKRKKYSDNLILRRRTK) are disordered.

The protein belongs to the universal ribosomal protein uL2 family. Part of the 50S ribosomal subunit.

The protein resides in the plastid. It is found in the chloroplast. This chain is Large ribosomal subunit protein uL2cz/uL2cy (rpl2-A), found in Lotus japonicus (Lotus corniculatus var. japonicus).